The primary structure comprises 594 residues: Cryptochrome-2 (594 aa).

The region spanning 21–150 (ASSVHWFRKG…EVVTENSHTL (130 aa)) is the Photolyase/cryptochrome alpha/beta domain. Lysine 29 participates in a covalent cross-link: Glycyl lysine isopeptide (Lys-Gly) (interchain with G-Cter in ubiquitin). A Phosphoserine modification is found at serine 89. Glycyl lysine isopeptide (Lys-Gly) (interchain with G-Cter in ubiquitin) cross-links involve residues lysine 125 and lysine 241. A Phosphoserine; by MAPK modification is found at serine 265. Serine 270 is a binding site for FAD. Serine 298 is modified (phosphoserine). Glutamine 307 lines the FAD pocket. Lysine 347 is covalently cross-linked (Glycyl lysine isopeptide (Lys-Gly) (interchain with G-Cter in ubiquitin)). Residues histidine 373 and 405-407 (DAD) contribute to the FAD site. The tract at residues 389–488 (WVSWESGVRV…IIGVDYPRPI (100 aa)) is required for inhibition of CLOCK-BMAL1-mediated transcription. Residues lysine 474 and lysine 503 each participate in a glycyl lysine isopeptide (Lys-Gly) (interchain with G-Cter in ubiquitin) cross-link. The segment at 532-594 (VAEPGSSQAG…PAQEPPSKDS (63 aa)) is disordered. Polar residues predominate over residues 536-547 (GSSQAGSISNTG). The residue at position 553 (serine 553) is a Phosphoserine; by GSK3-beta. A Phosphoserine; by DYRK1A and MAPK modification is found at serine 557.

It belongs to the DNA photolyase class-1 family. As to quaternary structure, component of the circadian core oscillator, which includes the CRY proteins, CLOCK or NPAS2, BMAL1 or BMAL2, CSNK1D and/or CSNK1E, TIMELESS, and the PER proteins. Interacts with TIMELESS. Interacts directly with PER1, PER2 and PER3; interaction with PER2 inhibits its ubiquitination and vice versa. Interacts with CLOCK-BMAL1. Interacts with CLOCK. Interacts with BMAL1. Interacts with NFIL3. Interacts with FBXL3 and FBXL21. FBXL3, PER2 and the cofactor FAD compete for overlapping binding sites. FBXL3 cannot bind CRY2 that interacts already with PER2 or that contains bound FAD. Interacts with PPP5C (via TPR repeats); the interaction down-regulates the PPP5C phosphatase activity on CSNK1E. Interacts with nuclear receptors AR and NR3C1/GR; the interaction is ligand dependent. Interacts with PRKDC and CIART. Interacts with DDB1, USP7 and TARDBP. Interacts with HNF4A and PPARA. Interacts with PPARD (via domain NR LBD) and NR1I2 (via domain NR LBD) in a ligand-dependent manner. Interacts with PPARG, NR1I3 and VDR in a ligand-dependent manner. FAD serves as cofactor. Requires (6R)-5,10-methylene-5,6,7,8-tetrahydrofolate as cofactor. Phosphorylation on Ser-265 by MAPK is important for the inhibition of CLOCK-BMAL1-mediated transcriptional activity. Phosphorylation by CSKNe requires interaction with PER1 or PER2. Phosphorylated in a circadian manner at Ser-553 and Ser-557 in the suprachiasmatic nucleus (SCN) and liver. Phosphorylation at Ser-557 by DYRK1A promotes subsequent phosphorylation at Ser-553 by GSK3-beta: the two-step phosphorylation at the neighboring Ser residues leads to its proteasomal degradation. In terms of processing, ubiquitinated by the SCF(FBXL3) and SCF(FBXL21) complexes, regulating the balance between degradation and stabilization. The SCF(FBXL3) complex is mainly nuclear and mediates ubiquitination and subsequent degradation of CRY2. In contrast, cytoplasmic SCF(FBXL21) complex-mediated ubiquitination leads to stabilize CRY2 and counteract the activity of the SCF(FBXL3) complex. The SCF(FBXL3) and SCF(FBXL21) complexes probably mediate ubiquitination at different Lys residues. The SCF(FBXL3) complex recognizes and binds CRY2 phosphorylated at Ser-553 and Ser-557. Ubiquitination may be inhibited by PER2. Deubiquitinated by USP7. As to expression, expressed in all tissues examined including heart, cerebellum, cerebral cortex, lung, liver, muscle, kidney and ovary. Highest levels in heart, liver and ovary. Highly expressed in the suprachiasmatic nucleus (SCN).

The protein localises to the cytoplasm. Its subcellular location is the nucleus. Its function is as follows. Transcriptional repressor which forms a core component of the circadian clock. The circadian clock, an internal time-keeping system, regulates various physiological processes through the generation of approximately 24 hour circadian rhythms in gene expression, which are translated into rhythms in metabolism and behavior. It is derived from the Latin roots 'circa' (about) and 'diem' (day) and acts as an important regulator of a wide array of physiological functions including metabolism, sleep, body temperature, blood pressure, endocrine, immune, cardiovascular, and renal function. Consists of two major components: the central clock, residing in the suprachiasmatic nucleus (SCN) of the brain, and the peripheral clocks that are present in nearly every tissue and organ system. Both the central and peripheral clocks can be reset by environmental cues, also known as Zeitgebers (German for 'timegivers'). The predominant Zeitgeber for the central clock is light, which is sensed by retina and signals directly to the SCN. The central clock entrains the peripheral clocks through neuronal and hormonal signals, body temperature and feeding-related cues, aligning all clocks with the external light/dark cycle. Circadian rhythms allow an organism to achieve temporal homeostasis with its environment at the molecular level by regulating gene expression to create a peak of protein expression once every 24 hours to control when a particular physiological process is most active with respect to the solar day. Transcription and translation of core clock components (CLOCK, NPAS2, BMAL1, BMAL2, PER1, PER2, PER3, CRY1 and CRY2) plays a critical role in rhythm generation, whereas delays imposed by post-translational modifications (PTMs) are important for determining the period (tau) of the rhythms (tau refers to the period of a rhythm and is the length, in time, of one complete cycle). A diurnal rhythm is synchronized with the day/night cycle, while the ultradian and infradian rhythms have a period shorter and longer than 24 hours, respectively. Disruptions in the circadian rhythms contribute to the pathology of cardiovascular diseases, cancer, metabolic syndromes and aging. A transcription/translation feedback loop (TTFL) forms the core of the molecular circadian clock mechanism. Transcription factors, CLOCK or NPAS2 and BMAL1 or BMAL2, form the positive limb of the feedback loop, act in the form of a heterodimer and activate the transcription of core clock genes and clock-controlled genes (involved in key metabolic processes), harboring E-box elements (5'-CACGTG-3') within their promoters. The core clock genes: PER1/2/3 and CRY1/2 which are transcriptional repressors form the negative limb of the feedback loop and interact with the CLOCK|NPAS2-BMAL1|BMAL2 heterodimer inhibiting its activity and thereby negatively regulating their own expression. This heterodimer also activates nuclear receptors NR1D1/2 and RORA/B/G, which form a second feedback loop and which activate and repress BMAL1 transcription, respectively. CRY1 and CRY2 have redundant functions but also differential and selective contributions at least in defining the pace of the SCN circadian clock and its circadian transcriptional outputs. Less potent transcriptional repressor in cerebellum and liver than CRY1, though less effective in lengthening the period of the SCN oscillator. Seems to play a critical role in tuning SCN circadian period by opposing the action of CRY1. With CRY1, dispensable for circadian rhythm generation but necessary for the development of intercellular networks for rhythm synchrony. May mediate circadian regulation of cAMP signaling and gluconeogenesis by blocking glucagon-mediated increases in intracellular cAMP concentrations and in CREB1 phosphorylation. Besides its role in the maintenance of the circadian clock, is also involved in the regulation of other processes. Plays a key role in glucose and lipid metabolism modulation, in part, through the transcriptional regulation of genes involved in these pathways, such as LEP or ACSL4. Represses glucocorticoid receptor NR3C1/GR-induced transcriptional activity by binding to glucocorticoid response elements (GREs). Represses the CLOCK-BMAL1 induced transcription of BHLHE40/DEC1 and NAMPT. Represses PPARD and its target genes in the skeletal muscle and limits exercise capacity. Represses the transcriptional activity of NR1I2. This is Cryptochrome-2 (Cry2) from Rattus norvegicus (Rat).